The following is a 415-amino-acid chain: Serine hydroxymethyltransferase (415 aa).

Residues leucine 117 and 121-123 (GHL) each bind (6S)-5,6,7,8-tetrahydrofolate. Lysine 226 is subject to N6-(pyridoxal phosphate)lysine. Glutamate 241 is a binding site for (6S)-5,6,7,8-tetrahydrofolate.

This sequence belongs to the SHMT family. Homodimer. Requires pyridoxal 5'-phosphate as cofactor.

Its subcellular location is the cytoplasm. The enzyme catalyses (6R)-5,10-methylene-5,6,7,8-tetrahydrofolate + glycine + H2O = (6S)-5,6,7,8-tetrahydrofolate + L-serine. The protein operates within one-carbon metabolism; tetrahydrofolate interconversion. It functions in the pathway amino-acid biosynthesis; glycine biosynthesis; glycine from L-serine: step 1/1. Its function is as follows. Catalyzes the reversible interconversion of serine and glycine with tetrahydrofolate (THF) serving as the one-carbon carrier. This reaction serves as the major source of one-carbon groups required for the biosynthesis of purines, thymidylate, methionine, and other important biomolecules. Also exhibits THF-independent aldolase activity toward beta-hydroxyamino acids, producing glycine and aldehydes, via a retro-aldol mechanism. The polypeptide is Serine hydroxymethyltransferase (Bacillus velezensis (strain DSM 23117 / BGSC 10A6 / LMG 26770 / FZB42) (Bacillus amyloliquefaciens subsp. plantarum)).